The following is an 81-amino-acid chain: Exodeoxyribonuclease 7 small subunit (81 aa).

The disordered stretch occupies residues 59–81 (KLVDKDGNEKTLDPQNASAPEEE). Residues 60 to 70 (LVDKDGNEKTL) are compositionally biased toward basic and acidic residues. Residues 71 to 81 (DPQNASAPEEE) are compositionally biased toward polar residues.

The protein belongs to the XseB family. Heterooligomer composed of large and small subunits.

It localises to the cytoplasm. It catalyses the reaction Exonucleolytic cleavage in either 5'- to 3'- or 3'- to 5'-direction to yield nucleoside 5'-phosphates.. Its function is as follows. Bidirectionally degrades single-stranded DNA into large acid-insoluble oligonucleotides, which are then degraded further into small acid-soluble oligonucleotides. The chain is Exodeoxyribonuclease 7 small subunit from Lactobacillus gasseri (strain ATCC 33323 / DSM 20243 / BCRC 14619 / CIP 102991 / JCM 1131 / KCTC 3163 / NCIMB 11718 / NCTC 13722 / AM63).